The primary structure comprises 354 residues: Phenylalanine--tRNA ligase alpha subunit (354 aa).

E279 is a Mg(2+) binding site.

This sequence belongs to the class-II aminoacyl-tRNA synthetase family. Phe-tRNA synthetase alpha subunit type 1 subfamily. Tetramer of two alpha and two beta subunits. It depends on Mg(2+) as a cofactor.

It is found in the cytoplasm. The enzyme catalyses tRNA(Phe) + L-phenylalanine + ATP = L-phenylalanyl-tRNA(Phe) + AMP + diphosphate + H(+). This Cupriavidus pinatubonensis (strain JMP 134 / LMG 1197) (Cupriavidus necator (strain JMP 134)) protein is Phenylalanine--tRNA ligase alpha subunit.